The chain runs to 251 residues: Ribosomal RNA small subunit methyltransferase J (251 aa).

S-adenosyl-L-methionine is bound by residues 100–101 (RD), 116–117 (ER), and Asp-170.

This sequence belongs to the methyltransferase superfamily. RsmJ family.

Its subcellular location is the cytoplasm. It carries out the reaction guanosine(1516) in 16S rRNA + S-adenosyl-L-methionine = N(2)-methylguanosine(1516) in 16S rRNA + S-adenosyl-L-homocysteine + H(+). Its function is as follows. Specifically methylates the guanosine in position 1516 of 16S rRNA. The polypeptide is Ribosomal RNA small subunit methyltransferase J (Haemophilus ducreyi (strain 35000HP / ATCC 700724)).